A 437-amino-acid polypeptide reads, in one-letter code: Probable peptidoglycan-N-acetylglucosamine deacetylase ARB_03699 (437 aa).

A signal peptide spans 1–20 (MLMRLYTFFAAALLACCAAA). Residues 47–132 (STRAATTTTT…STSAAAPSTP (86 aa)) are disordered. N-linked (GlcNAc...) asparagine glycosylation is present at asparagine 99. Positions 149 to 334 (GTVAITFDDG…EVKRRGLKAV (186 aa)) constitute a NodB homology domain. The Proton acceptor role is filled by aspartate 156. The Zn(2+) site is built by aspartate 157, histidine 209, and histidine 213. Residue tyrosine 251 coordinates substrate. Histidine 308 serves as the catalytic Proton donor. Residues 350–370 (TTPVQVPTGTSTTSPTATPTS) show a composition bias toward low complexity. The interval 350 to 384 (TTPVQVPTGTSTTSPTATPTSPGTPPPAPTQPGVA) is disordered. The LysM domain occupies 389–435 (KWHTVVSGDTCYDIAAANGISLDNLYKWNPAVGTSCASLWLGYAVCV).

Requires Zn(2+) as cofactor. It depends on Co(2+) as a cofactor.

Its subcellular location is the secreted. The catalysed reaction is peptidoglycan-N-acetyl-D-glucosamine + H2O = peptidoglycan-D-glucosamine + acetate.. Catalyzes the deacetylation of N-acetylglucosamine (GlcNAc) residues in peptidoglycan. The sequence is that of Probable peptidoglycan-N-acetylglucosamine deacetylase ARB_03699 from Arthroderma benhamiae (strain ATCC MYA-4681 / CBS 112371) (Trichophyton mentagrophytes).